A 208-amino-acid chain; its full sequence is Small ribosomal subunit protein uS4 (208 aa).

In terms of domain architecture, S4 RNA-binding spans 98–161; it reads RRLDNVVYRL…KASPRIKELV (64 aa).

The protein belongs to the universal ribosomal protein uS4 family. Part of the 30S ribosomal subunit. Contacts protein S5. The interaction surface between S4 and S5 is involved in control of translational fidelity.

Its function is as follows. One of the primary rRNA binding proteins, it binds directly to 16S rRNA where it nucleates assembly of the body of the 30S subunit. In terms of biological role, with S5 and S12 plays an important role in translational accuracy. The chain is Small ribosomal subunit protein uS4 from Desulforamulus reducens (strain ATCC BAA-1160 / DSM 100696 / MI-1) (Desulfotomaculum reducens).